The sequence spans 591 residues: Pentatricopeptide repeat-containing protein At2g35130 (591 aa).

PPR repeat units lie at residues 154–188 (DVIC…RYVP), 189–223 (TEDT…HVSP), 227–262 (GVTV…RCKP), 263–297 (TTET…QCKP), 298–332 (NICT…GLEP), 333–367 (DVYV…GCEP), 368–402 (DRAS…GIAP), 403–437 (TMKS…GVEP), 438–472 (DTFV…PCTA), 473–507 (DIST…NFRP), 508–542 (DVVT…GCAP), and 543–573 (DGGT…MHKG).

Belongs to the PPR family. P subfamily.

The sequence is that of Pentatricopeptide repeat-containing protein At2g35130 from Arabidopsis thaliana (Mouse-ear cress).